The following is a 319-amino-acid chain: Acetyl-coenzyme A carboxylase carboxyl transferase subunit alpha (319 aa).

The CoA carboxyltransferase C-terminal domain occupies asparagine 32–alanine 293.

It belongs to the AccA family. In terms of assembly, acetyl-CoA carboxylase is a heterohexamer composed of biotin carboxyl carrier protein (AccB), biotin carboxylase (AccC) and two subunits each of ACCase subunit alpha (AccA) and ACCase subunit beta (AccD).

The protein localises to the cytoplasm. It catalyses the reaction N(6)-carboxybiotinyl-L-lysyl-[protein] + acetyl-CoA = N(6)-biotinyl-L-lysyl-[protein] + malonyl-CoA. It participates in lipid metabolism; malonyl-CoA biosynthesis; malonyl-CoA from acetyl-CoA: step 1/1. Component of the acetyl coenzyme A carboxylase (ACC) complex. First, biotin carboxylase catalyzes the carboxylation of biotin on its carrier protein (BCCP) and then the CO(2) group is transferred by the carboxyltransferase to acetyl-CoA to form malonyl-CoA. In Xylella fastidiosa (strain Temecula1 / ATCC 700964), this protein is Acetyl-coenzyme A carboxylase carboxyl transferase subunit alpha.